A 127-amino-acid chain; its full sequence is Anti-adapter protein IraD (127 aa).

It belongs to the GpW/Gp25 family. IraD subfamily. In terms of assembly, interacts with RssB.

It is found in the cytoplasm. Inhibits RpoS proteolysis by regulating RssB activity, thereby increasing the stability of the sigma stress factor RpoS during oxidative stress. Its effect on RpoS stability is due to its interaction with RssB, which probably blocks the interaction of RssB with RpoS, and the consequent delivery of the RssB-RpoS complex to the ClpXP protein degradation pathway. The polypeptide is Anti-adapter protein IraD (Escherichia coli O127:H6 (strain E2348/69 / EPEC)).